The sequence spans 446 residues: Glucose-6-phosphate isomerase (446 aa).

Catalysis depends on E288, which acts as the Proton donor. Active-site residues include H309 and K423.

This sequence belongs to the GPI family.

The protein localises to the cytoplasm. The enzyme catalyses alpha-D-glucose 6-phosphate = beta-D-fructose 6-phosphate. The protein operates within carbohydrate biosynthesis; gluconeogenesis. It participates in carbohydrate degradation; glycolysis; D-glyceraldehyde 3-phosphate and glycerone phosphate from D-glucose: step 2/4. Its function is as follows. Catalyzes the reversible isomerization of glucose-6-phosphate to fructose-6-phosphate. In Lacticaseibacillus casei (strain BL23) (Lactobacillus casei), this protein is Glucose-6-phosphate isomerase.